Reading from the N-terminus, the 36-residue chain is Protein YibY (36 aa).

The polypeptide is Protein YibY (Escherichia coli (strain K12)).